The sequence spans 304 residues: Tyrosine recombinase XerD (304 aa).

Positions 6 to 91 constitute a Core-binding (CB) domain; the sequence is EPWRKTLETF…AIRSFHKFLL (86 aa). A Tyr recombinase domain is found at 112–298; sequence YLPSVLTIEE…DRSFIKEVHK (187 aa). Residues Arg-155, Lys-179, His-250, Arg-253, and His-276 contribute to the active site. The active-site O-(3'-phospho-DNA)-tyrosine intermediate is the Tyr-285.

The protein belongs to the 'phage' integrase family. XerD subfamily. Forms a cyclic heterotetrameric complex composed of two molecules of XerC and two molecules of XerD.

It localises to the cytoplasm. Site-specific tyrosine recombinase, which acts by catalyzing the cutting and rejoining of the recombining DNA molecules. The XerC-XerD complex is essential to convert dimers of the bacterial chromosome into monomers to permit their segregation at cell division. It also contributes to the segregational stability of plasmids. This is Tyrosine recombinase XerD from Chlorobaculum tepidum (strain ATCC 49652 / DSM 12025 / NBRC 103806 / TLS) (Chlorobium tepidum).